The primary structure comprises 172 residues: Small ribosomal subunit protein uS13c (172 aa).

A chloroplast-targeting transit peptide spans 1-47; that stretch reads MAHTLATPVAPSVSLICNTKLSVSLSSSSLAFRPVNPKNGGGLSIKC.

In terms of assembly, component of the chloroplast small ribosomal subunit (SSU). Mature 70S chloroplast ribosomes of higher plants consist of a small (30S) and a large (50S) subunit. The 30S small subunit contains 1 molecule of ribosomal RNA (16S rRNA) and 24 different proteins. The 50S large subunit contains 3 rRNA molecules (23S, 5S and 4.5S rRNA) and 33 different proteins. uS13c interacts with translation factor pY (PSRP1).

The protein localises to the plastid. Its subcellular location is the chloroplast. Its function is as follows. Component of the chloroplast ribosome (chloro-ribosome), a dedicated translation machinery responsible for the synthesis of chloroplast genome-encoded proteins, including proteins of the transcription and translation machinery and components of the photosynthetic apparatus. In Spinacia oleracea (Spinach), this protein is Small ribosomal subunit protein uS13c (RPS13).